A 169-amino-acid chain; its full sequence is Copper-resistant cuproprotein CopI (169 aa).

A signal peptide spans 1-20; the sequence is MIKKTLLVIALTFTVTTAFA. Residues H98, C153, H158, and M163 each contribute to the Cu(2+) site.

The protein belongs to the CopI family.

The protein resides in the periplasm. In terms of biological role, involved in copper tolerance. Mediates copper tolerance in aerobiosis. May also mediate tolerance under anaerobiosis. Not required for virulence or colonization in the mouse model. The polypeptide is Copper-resistant cuproprotein CopI (Vibrio cholerae serotype O1 (strain ATCC 39315 / El Tor Inaba N16961)).